A 353-amino-acid chain; its full sequence is 3-dehydroquinate synthase (353 aa).

This sequence belongs to the archaeal-type DHQ synthase family.

The enzyme catalyses 2-amino-2,3,7-trideoxy-D-lyxo-hept-6-ulosonate + NAD(+) + H2O = 3-dehydroquinate + NH4(+) + NADH + H(+). Functionally, catalyzes the oxidative deamination and cyclization of 2-amino-3,7-dideoxy-D-threo-hept-6-ulosonic acid (ADH) to yield 3-dehydroquinate (DHQ), which is fed into the canonical shikimic pathway of aromatic amino acid biosynthesis. In Nitrosopumilus maritimus (strain SCM1), this protein is 3-dehydroquinate synthase.